The sequence spans 456 residues: Argininosuccinate lyase (456 aa).

Belongs to the lyase 1 family. Argininosuccinate lyase subfamily.

The protein resides in the cytoplasm. The catalysed reaction is 2-(N(omega)-L-arginino)succinate = fumarate + L-arginine. It participates in amino-acid biosynthesis; L-arginine biosynthesis; L-arginine from L-ornithine and carbamoyl phosphate: step 3/3. The chain is Argininosuccinate lyase from Carboxydothermus hydrogenoformans (strain ATCC BAA-161 / DSM 6008 / Z-2901).